The following is a 103-amino-acid chain: Small ribosomal subunit protein uS10 (103 aa).

Belongs to the universal ribosomal protein uS10 family. As to quaternary structure, part of the 30S ribosomal subunit.

Involved in the binding of tRNA to the ribosomes. This is Small ribosomal subunit protein uS10 from Ruminiclostridium cellulolyticum (strain ATCC 35319 / DSM 5812 / JCM 6584 / H10) (Clostridium cellulolyticum).